Here is a 192-residue protein sequence, read N- to C-terminus: Shikimate kinase (192 aa).

Position 15-20 (15-20) interacts with ATP; it reads GAGKTT. A Mg(2+)-binding site is contributed by T19. Substrate-binding residues include D37, R61, and G83. R121 lines the ATP pocket. R140 lines the substrate pocket.

Belongs to the shikimate kinase family. As to quaternary structure, monomer. Requires Mg(2+) as cofactor.

It is found in the cytoplasm. The catalysed reaction is shikimate + ATP = 3-phosphoshikimate + ADP + H(+). The protein operates within metabolic intermediate biosynthesis; chorismate biosynthesis; chorismate from D-erythrose 4-phosphate and phosphoenolpyruvate: step 5/7. Its function is as follows. Catalyzes the specific phosphorylation of the 3-hydroxyl group of shikimic acid using ATP as a cosubstrate. This is Shikimate kinase from Cupriavidus pinatubonensis (strain JMP 134 / LMG 1197) (Cupriavidus necator (strain JMP 134)).